A 1445-amino-acid chain; its full sequence is DNA-directed RNA polymerase subunit beta'' (1445 aa).

Residues cysteine 220, cysteine 293, cysteine 300, and cysteine 303 each coordinate Zn(2+).

The protein belongs to the RNA polymerase beta' chain family. RpoC2 subfamily. In terms of assembly, in plastids the minimal PEP RNA polymerase catalytic core is composed of four subunits: alpha, beta, beta', and beta''. When a (nuclear-encoded) sigma factor is associated with the core the holoenzyme is formed, which can initiate transcription. Zn(2+) is required as a cofactor.

The protein localises to the plastid. It is found in the chloroplast. It catalyses the reaction RNA(n) + a ribonucleoside 5'-triphosphate = RNA(n+1) + diphosphate. DNA-dependent RNA polymerase catalyzes the transcription of DNA into RNA using the four ribonucleoside triphosphates as substrates. This is DNA-directed RNA polymerase subunit beta'' from Anthoceros angustus (Hornwort).